Consider the following 316-residue polypeptide: MKALWAVLVVTLLAGCLAEGEPELEPEVTDRLAWQSGQPWELALGRFWDYLRWVQTLSDQVQEELQSSQVTQELTVLMEDTMTELKAYKKELEEQLGPMAEETRARLAKEVQAAQSRLGADMEDLRNRLGQYRNEVQTMLGQSTEELRARLSTHLRKLRKRLMRDAEDLQKRLAVYKAGAREGAERGVGAIRERLGPLVEQGRQRTANLGAGAGKPLQDRAQALGARIRGRLEEVGNQARDRLEEVREQMEEVRAKVEEQAQQMRLQAEIFQARLKGWFEPLVEDMQRQWANLVEKIQASVAANPIPPSSVPQESQ.

The signal sequence occupies residues 1–18 (MKALWAVLVVTLLAGCLA). 8 tandem repeats follow at residues 76 to 97 (VLME…EQLG), 98 to 119 (PMAE…SRLG), 120 to 141 (ADME…TMLG), 142 to 163 (QSTE…KRLM), 164 to 185 (RDAE…EGAE), 186 to 207 (RGVG…QRTA), 208 to 229 (NLGA…ARIR), and 230 to 251 (GRLE…EQME). Residues 76–251 (VLMEDTMTEL…RLEEVREQME (176 aa)) form an 8 X 22 AA approximate tandem repeats region. A Methionine sulfoxide modification is found at M139. S143 carries the post-translational modification Phosphoserine. The tract at residues 154–164 (HLRKLRKRLMR) is LDL and other lipoprotein receptors binding. 158 to 161 (LRKR) contributes to the heparin binding site. A lipid-binding and lipoprotein association region spans residues 206–286 (TANLGAGAGK…GWFEPLVEDM (81 aa)). 225 to 232 (GARIRGRL) lines the heparin pocket. The segment at 262–316 (QQMRLQAEIFQARLKGWFEPLVEDMQRQWANLVEKIQASVAANPIPPSSVPQESQ) is homooligomerization. A specificity for association with VLDL region spans residues 274 to 286 (RLKGWFEPLVEDM).

The protein belongs to the apolipoprotein A1/A4/E family. Homotetramer. May interact with ABCA1; functionally associated with ABCA1 in the biogenesis of HDLs. May interact with APP/A4 amyloid-beta peptide; the interaction is extremely stable in vitro but its physiological significance is unclear. May interact with MAPT. May interact with MAP2. In the cerebrospinal fluid, interacts with secreted SORL1. Interacts with PMEL; this allows the loading of PMEL luminal fragment on ILVs to induce fibril nucleation. APOE exists as multiple glycosylated and sialylated glycoforms within cells and in plasma. The extent of glycosylation and sialylation are tissue and context specific. Post-translationally, glycated in plasma VLDL. In terms of processing, phosphorylated by FAM20C in the extracellular medium.

The protein localises to the secreted. The protein resides in the extracellular space. Its subcellular location is the extracellular matrix. It localises to the extracellular vesicle. It is found in the endosome. The protein localises to the multivesicular body. APOE is an apolipoprotein, a protein associating with lipid particles, that mainly functions in lipoprotein-mediated lipid transport between organs via the plasma and interstitial fluids. APOE is a core component of plasma lipoproteins and is involved in their production, conversion and clearance. Apolipoproteins are amphipathic molecules that interact both with lipids of the lipoprotein particle core and the aqueous environment of the plasma. As such, APOE associates with chylomicrons, chylomicron remnants, very low density lipoproteins (VLDL) and intermediate density lipoproteins (IDL) but shows a preferential binding to high-density lipoproteins (HDL). It also binds a wide range of cellular receptors including the LDL receptor/LDLR, the LDL receptor-related proteins LRP1, LRP2 and LRP8 and the very low-density lipoprotein receptor/VLDLR that mediate the cellular uptake of the APOE-containing lipoprotein particles. Finally, APOE also has a heparin-binding activity and binds heparan-sulfate proteoglycans on the surface of cells, a property that supports the capture and the receptor-mediated uptake of APOE-containing lipoproteins by cells. A main function of APOE is to mediate lipoprotein clearance through the uptake of chylomicrons, VLDLs, and HDLs by hepatocytes. APOE is also involved in the biosynthesis by the liver of VLDLs as well as their uptake by peripheral tissues ensuring the delivery of triglycerides and energy storage in muscle, heart and adipose tissues. By participating in the lipoprotein-mediated distribution of lipids among tissues, APOE plays a critical role in plasma and tissues lipid homeostasis. APOE is also involved in two steps of reverse cholesterol transport, the HDLs-mediated transport of cholesterol from peripheral tissues to the liver, and thereby plays an important role in cholesterol homeostasis. First, it is functionally associated with ABCA1 in the biogenesis of HDLs in tissues. Second, it is enriched in circulating HDLs and mediates their uptake by hepatocytes. APOE also plays an important role in lipid transport in the central nervous system, regulating neuron survival and sprouting. This Onychomys torridus (Southern grasshopper mouse) protein is Apolipoprotein E (Apoe).